The following is a 222-amino-acid chain: Ribosomal RNA large subunit methyltransferase E (222 aa).

Gly-64, Trp-66, Asp-92, Asp-108, and Asp-133 together coordinate S-adenosyl-L-methionine. The Proton acceptor role is filled by Lys-173.

The protein belongs to the class I-like SAM-binding methyltransferase superfamily. RNA methyltransferase RlmE family.

The protein resides in the cytoplasm. The enzyme catalyses uridine(2552) in 23S rRNA + S-adenosyl-L-methionine = 2'-O-methyluridine(2552) in 23S rRNA + S-adenosyl-L-homocysteine + H(+). In terms of biological role, specifically methylates the uridine in position 2552 of 23S rRNA at the 2'-O position of the ribose in the fully assembled 50S ribosomal subunit. The chain is Ribosomal RNA large subunit methyltransferase E from Variovorax paradoxus (strain S110).